Reading from the N-terminus, the 223-residue chain is Type III pantothenate kinase (223 aa).

17-24 (DIGNTRIH) serves as a coordination point for ATP. Substrate contacts are provided by residues tyrosine 81 and 85–88 (GIDR). The active-site Proton acceptor is aspartate 87. Aspartate 102 is a K(+) binding site. Position 105 (serine 105) interacts with ATP. Threonine 157 is a binding site for substrate.

Belongs to the type III pantothenate kinase family. As to quaternary structure, homodimer. NH4(+) is required as a cofactor. K(+) serves as cofactor.

It localises to the cytoplasm. The catalysed reaction is (R)-pantothenate + ATP = (R)-4'-phosphopantothenate + ADP + H(+). It participates in cofactor biosynthesis; coenzyme A biosynthesis; CoA from (R)-pantothenate: step 1/5. In terms of biological role, catalyzes the phosphorylation of pantothenate (Pan), the first step in CoA biosynthesis. This Helicobacter pylori (strain J99 / ATCC 700824) (Campylobacter pylori J99) protein is Type III pantothenate kinase.